A 54-amino-acid chain; its full sequence is ATP synthase F(0) complex subunit 8 (54 aa).

The chain crosses the membrane as a helical span at residues 8-24 (PWFSIMLLTWFTFSLLI).

This sequence belongs to the ATPase protein 8 family. As to quaternary structure, component of the ATP synthase complex composed at least of ATP5F1A/subunit alpha, ATP5F1B/subunit beta, ATP5MC1/subunit c (homooctomer), MT-ATP6/subunit a, MT-ATP8/subunit 8, ATP5ME/subunit e, ATP5MF/subunit f, ATP5MG/subunit g, ATP5MK/subunit k, ATP5MJ/subunit j, ATP5F1C/subunit gamma, ATP5F1D/subunit delta, ATP5F1E/subunit epsilon, ATP5PF/subunit F6, ATP5PB/subunit b, ATP5PD/subunit d, ATP5PO/subunit OSCP. ATP synthase complex consists of a soluble F(1) head domain (subunits alpha(3) and beta(3)) - the catalytic core - and a membrane F(0) domain - the membrane proton channel (subunits c, a, 8, e, f, g, k and j). These two domains are linked by a central stalk (subunits gamma, delta, and epsilon) rotating inside the F1 region and a stationary peripheral stalk (subunits F6, b, d, and OSCP).

It localises to the mitochondrion membrane. Functionally, subunit 8, of the mitochondrial membrane ATP synthase complex (F(1)F(0) ATP synthase or Complex V) that produces ATP from ADP in the presence of a proton gradient across the membrane which is generated by electron transport complexes of the respiratory chain. ATP synthase complex consist of a soluble F(1) head domain - the catalytic core - and a membrane F(1) domain - the membrane proton channel. These two domains are linked by a central stalk rotating inside the F(1) region and a stationary peripheral stalk. During catalysis, ATP synthesis in the catalytic domain of F(1) is coupled via a rotary mechanism of the central stalk subunits to proton translocation. In vivo, can only synthesize ATP although its ATP hydrolase activity can be activated artificially in vitro. Part of the complex F(0) domain. This Gallus gallus (Chicken) protein is ATP synthase F(0) complex subunit 8.